The primary structure comprises 198 residues: Recombination protein RecR (198 aa).

The segment at 57–72 (CEKCNTFTEAQICEVC) adopts a C4-type zinc-finger fold. In terms of domain architecture, Toprim spans 80 to 175 (TLLCVVETPA…AVTRLARGVP (96 aa)).

The protein belongs to the RecR family.

In terms of biological role, may play a role in DNA repair. It seems to be involved in an RecBC-independent recombinational process of DNA repair. It may act with RecF and RecO. This is Recombination protein RecR from Burkholderia cenocepacia (strain HI2424).